Consider the following 622-residue polypeptide: MRPKLLSVEAALFLALPELARAATRKFDFEIGWVRANPDNAFERPVIGINGQWPIPTIEVDIGDRVIINAHNNLGNQSTSLHFHGLYMNGSTHMDGPAGVSQCPIIPGTSFTYNFTVDQPGTYWYHSHTAAQYPDGLRGPFIVHDKDFPYAKKYDEEVVLTLSDWYHDEMRSLIPQFMAKSNPSGAEPVPKNALMNETTNFTMSVQPEKTYLFRVINVGAFAGQYLWFEGHKMQIVEVDGIYTEEAEAEMIYISAAQRVSFLLTTKKDTSKNFPIVASMDTTLFDVLPPDLKYNSTGWLVYDKKAEKPVPATVDSLNPFDDMTLVPYDKMEILGKPDKEVVLDVKMDNLKDGKNYAFFNDITYTEAKVPTLYTALSAGKDAEDPAVYGTYTHSMVLKKNEIVQLVVNNLDSGRHPFHLHGHAFQSVYRSEEEAGIWADANVTEKNLPKTPMRRDTLVIYPNGNIVMRFKADNPGVWLFHCHIEWHVISGLIATFVEDPLALQETIEIPKNHLDACAAANMPTKGNAAANTEDFLDLTGENKPANTLPPGFTPRGIVALVFSCICGILGVAVVAWYGFSAPVGSTSAGALSAGLVENDSGDVHSAQKGPQETVVSPTGDARSH.

The signal sequence occupies residues 1 to 22 (MRPKLLSVEAALFLALPELARA). Over 23–553 (ATRKFDFEIG…NTLPPGFTPR (531 aa)) the chain is Extracellular. 3 consecutive Plastocyanin-like domains span residues 31–146 (IGWV…VHDK), 156–303 (EEVV…VYDK), and 363–498 (YTEA…VEDP). Asparagine 76 is a glycosylation site (N-linked (GlcNAc...) asparagine). The Cu cation site is built by histidine 82 and histidine 84. 2 N-linked (GlcNAc...) asparagine glycosylation sites follow: asparagine 89 and asparagine 114. 2 residues coordinate Cu cation: histidine 126 and histidine 128. Asparagine 196, asparagine 200, and asparagine 294 each carry an N-linked (GlcNAc...) asparagine glycan. Cu cation contacts are provided by histidine 414, histidine 417, and histidine 419. N-linked (GlcNAc...) asparagine glycosylation is present at asparagine 440. Residues histidine 479, cysteine 480, histidine 481, and histidine 485 each contribute to the Cu cation site. Residues 554 to 574 (GIVALVFSCICGILGVAVVAW) form a helical membrane-spanning segment. Residues 575–622 (YGFSAPVGSTSAGALSAGLVENDSGDVHSAQKGPQETVVSPTGDARSH) are Cytoplasmic-facing. The disordered stretch occupies residues 597–622 (DSGDVHSAQKGPQETVVSPTGDARSH).

The protein belongs to the multicopper oxidase family.

The protein resides in the cell membrane. In terms of biological role, cell surface ferroxidase; part of the reductive iron assimilatory system (RIA), a siderophore-independent iron acquisition process. Required to oxidize Fe(2+) and release it from the transporter. Seems not to be involved in virulence. In Gibberella zeae (strain ATCC MYA-4620 / CBS 123657 / FGSC 9075 / NRRL 31084 / PH-1) (Wheat head blight fungus), this protein is Iron transport multicopper oxidase FET3.